A 268-amino-acid chain; its full sequence is MMKLRVSEAPFPGAPVMVMIAGLGGLGGYWLAQQSALSRDYQVVVYDQRGTGDNADTLPEGYTLADMAQELHRALLIHGVHRYAVLGHALGGLVGLELALAFPEAVSALVIVNGWLSLSAWTRRCFEARERLLLDSGPAAYIAAQPLFLYPPSWAQENQPRLEAEEALHNAHFQGTENLLRRLWALKNADYRERAARVITPVQIICARDDMLVPWTCSQALHEALPHSRLDVMDFGGHACNVTAPQPFHSLLYAGLASLAPAPHKETV.

Positions 15-119 (PVMVMIAGLG…VIVNGWLSLS (105 aa)) constitute an AB hydrolase-1 domain.

This sequence belongs to the AB hydrolase superfamily. Hydrolase RutD family.

It catalyses the reaction carbamate + 2 H(+) = NH4(+) + CO2. Its function is as follows. Involved in pyrimidine catabolism. May facilitate the hydrolysis of carbamate, a reaction that can also occur spontaneously. In Cronobacter sakazakii (strain ATCC BAA-894) (Enterobacter sakazakii), this protein is Putative carbamate hydrolase RutD.